Here is a 372-residue protein sequence, read N- to C-terminus: Spermidine/putrescine import ATP-binding protein PotA (372 aa).

An ABC transporter domain is found at 11–241 (IELRSIKKSY…PANLFVARFI (231 aa)). Residue 43–50 (GPSGCGKT) participates in ATP binding.

This sequence belongs to the ABC transporter superfamily. Spermidine/putrescine importer (TC 3.A.1.11.1) family. In terms of assembly, the complex is composed of two ATP-binding proteins (PotA), two transmembrane proteins (PotB and PotC) and a solute-binding protein (PotD).

The protein resides in the cell inner membrane. It carries out the reaction ATP + H2O + polyamine-[polyamine-binding protein]Side 1 = ADP + phosphate + polyamineSide 2 + [polyamine-binding protein]Side 1.. In terms of biological role, part of the ABC transporter complex PotABCD involved in spermidine/putrescine import. Responsible for energy coupling to the transport system. The chain is Spermidine/putrescine import ATP-binding protein PotA from Haemophilus influenzae (strain ATCC 51907 / DSM 11121 / KW20 / Rd).